Consider the following 359-residue polypeptide: S-adenosylmethionine:tRNA ribosyltransferase-isomerase (359 aa).

Belongs to the QueA family. In terms of assembly, monomer.

It is found in the cytoplasm. It catalyses the reaction 7-aminomethyl-7-carbaguanosine(34) in tRNA + S-adenosyl-L-methionine = epoxyqueuosine(34) in tRNA + adenine + L-methionine + 2 H(+). Its pathway is tRNA modification; tRNA-queuosine biosynthesis. In terms of biological role, transfers and isomerizes the ribose moiety from AdoMet to the 7-aminomethyl group of 7-deazaguanine (preQ1-tRNA) to give epoxyqueuosine (oQ-tRNA). In Synechococcus sp. (strain ATCC 27144 / PCC 6301 / SAUG 1402/1) (Anacystis nidulans), this protein is S-adenosylmethionine:tRNA ribosyltransferase-isomerase.